Reading from the N-terminus, the 200-residue chain is MARVLVVLSVVVASLFFSQGATFENQRLFNNAVIRVQHLHQLAAKMMDDFEEALLPEERKQLSKIFPLSFCNSDSIEAPAGKDETQKSSVLKLLHTSYRLIESWEFPSKNLGNPNHISEKLADLKMGIGVLIEGCLDGQTSLDENDSLAPPFEDFYQTLSEGNLRKSFRLLSCFKKDMHKVETYLSVAKCRRSLDSNCTL.

An N-terminal signal peptide occupies residues 1–22 (MARVLVVLSVVVASLFFSQGAT). His-38 lines the Zn(2+) pocket. Cys-71 and Cys-173 are joined by a disulfide. Glu-182 contacts Zn(2+). Cysteines 190 and 198 form a disulfide.

This sequence belongs to the somatotropin/prolactin family.

Its subcellular location is the secreted. Functionally, growth hormone plays an important role in growth control and is involved in the regulation of several anabolic processes. Implicated as an osmoregulatory substance important for seawater adaptation. This is Somatotropin (gh) from Pangasianodon gigas (Mekong giant catfish).